Consider the following 863-residue polypeptide: Penicillin-binding protein 1A (863 aa).

Residues 1-28 lie on the Cytoplasmic side of the membrane; that stretch reads MTENRDNKTSQSEKTTQKKKKKKFKAFK. The chain crosses the membrane as a helical; Signal-anchor for type II membrane protein span at residues 29 to 49; it reads IILITFITLIVISLVTAIGIT. At 50-863 the chain is on the extracellular side; it reads LAIIKTSPDI…KPIIRPKKHF (814 aa). Residues 71 to 248 are transglycosylase; sequence SKIYDDKGEL…PSVYYPYSRT (178 aa). Catalysis depends on glutamate 110, which acts as the Proton donor; for transglycosylase activity. The tract at residues 392–674 is transpeptidase; it reads ASAVLTDYHT…AAALFGKIMN (283 aa). The Acyl-ester intermediate; for transpeptidase activity role is filled by serine 431. The tract at residues 774–863 is disordered; it reads DDDMYVLPDK…KPIIRPKKHF (90 aa). Residues 808 to 836 are compositionally biased toward polar residues; that stretch reads EDATNEASTEPSPNTDTVPEDSTNNLDPT. Basic and acidic residues predominate over residues 837 to 846; the sequence is KNTEKKPSDK. Over residues 847–863 the composition is skewed to basic residues; the sequence is KNKKHVIKPIIRPKKHF.

It in the N-terminal section; belongs to the glycosyltransferase 51 family. In the C-terminal section; belongs to the transpeptidase family.

It is found in the cell membrane. It carries out the reaction [GlcNAc-(1-&gt;4)-Mur2Ac(oyl-L-Ala-gamma-D-Glu-L-Lys-D-Ala-D-Ala)](n)-di-trans,octa-cis-undecaprenyl diphosphate + beta-D-GlcNAc-(1-&gt;4)-Mur2Ac(oyl-L-Ala-gamma-D-Glu-L-Lys-D-Ala-D-Ala)-di-trans,octa-cis-undecaprenyl diphosphate = [GlcNAc-(1-&gt;4)-Mur2Ac(oyl-L-Ala-gamma-D-Glu-L-Lys-D-Ala-D-Ala)](n+1)-di-trans,octa-cis-undecaprenyl diphosphate + di-trans,octa-cis-undecaprenyl diphosphate + H(+). The enzyme catalyses Preferential cleavage: (Ac)2-L-Lys-D-Ala-|-D-Ala. Also transpeptidation of peptidyl-alanyl moieties that are N-acyl substituents of D-alanine.. Its pathway is cell wall biogenesis; peptidoglycan biosynthesis. In terms of biological role, cell wall formation. Synthesis of cross-linked peptidoglycan from the lipid intermediates. The enzyme has a penicillin-insensitive transglycosylase N-terminal domain (formation of linear glycan strands) and a penicillin-sensitive transpeptidase C-terminal domain (cross-linking of the peptide subunits). The polypeptide is Penicillin-binding protein 1A (pbpA) (Clostridium novyi (strain NT)).